Reading from the N-terminus, the 352-residue chain is Proton-activated chloride channel (352 aa).

The interval 1-55 (MEAIRKELSRSYQELNEEAEPVAIDPEEAEDEEKEQEEAASAVAPDRDSDRSSPP) is disordered. At 1–65 (MEAIRKELSR…VRFSRTCLKN (65 aa)) the chain is on the cytoplasmic side. A compositionally biased stretch (acidic residues) spans 15 to 38 (LNEEAEPVAIDPEEAEDEEKEQEE). The helical transmembrane segment at 66-86 (FFSVLLILVYLLLMGVAVFLV) threads the bilayer. The Extracellular portion of the chain corresponds to 87 to 299 (YQTITDFRDK…KDPYIQEIQD (213 aa)). The helical transmembrane segment at 300-320 (IITANPWSMIALLCSVFLVLF) threads the bilayer. At 321 to 352 (KAADFAKLSVKWMIKVRRRHLKKRARELNHIS) the chain is on the cytoplasmic side.

The protein belongs to the proton-activated chloride channel family.

Its subcellular location is the cell membrane. The catalysed reaction is chloride(in) = chloride(out). In terms of biological role, chloride channel gated by pH that facilitates the entry of chloride ions into cells upon exposure to extracellular acidic pH. The polypeptide is Proton-activated chloride channel (Xenopus tropicalis (Western clawed frog)).